We begin with the raw amino-acid sequence, 325 residues long: Bifunctional nuclease 2 (325 aa).

A BFN domain is found at 119-254; it reads CVHNNSQGRN…SLAYSDGIRS (136 aa). A UVR domain is found at 285 to 320; sequence EAQEFGLIRNMLIAAVEERYKDAATWRDKLMLLRSK.

The protein belongs to the bifunctional nuclease family.

The protein localises to the nucleus. Bifunctional nuclease with both RNase and DNase activities. Involved in basal defense response. Participates in abscisic acid-derived callose deposition following infection by a necrotrophic pathogen. The polypeptide is Bifunctional nuclease 2 (BBD2) (Oryza sativa subsp. japonica (Rice)).